A 233-amino-acid chain; its full sequence is Large ribosomal subunit protein uL1 (233 aa).

It belongs to the universal ribosomal protein uL1 family. Part of the 50S ribosomal subunit.

Functionally, binds directly to 23S rRNA. The L1 stalk is quite mobile in the ribosome, and is involved in E site tRNA release. Its function is as follows. Protein L1 is also a translational repressor protein, it controls the translation of the L11 operon by binding to its mRNA. The protein is Large ribosomal subunit protein uL1 of Shewanella sp. (strain MR-4).